The following is a 550-amino-acid chain: Formate--tetrahydrofolate ligase (550 aa).

60-67 (TPFGEGKT) is a binding site for ATP.

It belongs to the formate--tetrahydrofolate ligase family.

The catalysed reaction is (6S)-5,6,7,8-tetrahydrofolate + formate + ATP = (6R)-10-formyltetrahydrofolate + ADP + phosphate. It participates in one-carbon metabolism; tetrahydrofolate interconversion. The chain is Formate--tetrahydrofolate ligase from Campylobacter curvus (strain 525.92).